We begin with the raw amino-acid sequence, 361 residues long: 5-formaminoimidazole-4-carboxamide-1-(beta)-D-ribofuranosyl 5'-monophosphate synthetase (361 aa).

Residues His27 and Ser94 each contribute to the 5-amino-1-(5-phospho-beta-D-ribosyl)imidazole-4-carboxamide site. The 233-residue stretch at 116-348 folds into the ATP-grasp domain; it reads RRILRWESER…MGQRIAREIK (233 aa). ATP-binding positions include 156–166, 199–202, and Glu230; these read KFPGARGGRGY and EEYV. A 5-amino-1-(5-phospho-beta-D-ribosyl)imidazole-4-carboxamide-binding site is contributed by Asn258. Residues Gln297 and Glu310 each coordinate Mg(2+).

The protein belongs to the phosphohexose mutase family. As to quaternary structure, homohexamer. Dimer of trimers. Requires Mg(2+) as cofactor. Mn(2+) serves as cofactor.

It catalyses the reaction 5-amino-1-(5-phospho-beta-D-ribosyl)imidazole-4-carboxamide + formate + ATP = 5-formamido-1-(5-phospho-D-ribosyl)imidazole-4-carboxamide + ADP + phosphate. It participates in purine metabolism; IMP biosynthesis via de novo pathway; 5-formamido-1-(5-phospho-D-ribosyl)imidazole-4-carboxamide from 5-amino-1-(5-phospho-D-ribosyl)imidazole-4-carboxamide (formate route): step 1/1. Its activity is regulated as follows. Inhibited by ADP. Functionally, catalyzes the ATP- and formate-dependent formylation of 5-aminoimidazole-4-carboxamide-1-beta-d-ribofuranosyl 5'-monophosphate (AICAR) to 5-formaminoimidazole-4-carboxamide-1-beta-d-ribofuranosyl 5'-monophosphate (FAICAR) in the absence of folates. The protein is 5-formaminoimidazole-4-carboxamide-1-(beta)-D-ribofuranosyl 5'-monophosphate synthetase of Methanocaldococcus jannaschii (strain ATCC 43067 / DSM 2661 / JAL-1 / JCM 10045 / NBRC 100440) (Methanococcus jannaschii).